The chain runs to 350 residues: MSRIRLVDSVKAAGUAAKVAPGDLERILAGLPRDPSVEDRVIVGTRHNEDAAVVRLPGGQSIVQTLDFFTPIVNDPYHFGRIAAANALSDVYAMGGEPWCAMNIVCFPVKRLPESILADILRGGSDALREAGAALVGGHSVEDDELKYGLSVTGLIDPEIIASNAGLRPGDHLLLTKPLGTGILATAVKANWPGCDAHEEELFRWASRLNKGAGRVIRELRLKAATDVTGFGLGGHCLEMAGASGVTVALDTAALPVLPGVTELAGMGLVPEGSHANRAHCHKHVHVAPGVSPVLVDVAFDAQTSGGMLLAVSPDQMDAATTLLAETGDPAYPVGEVLKPLPGGVRLLLR.

U15 is an active-site residue. U15 is a non-standard amino acid (selenocysteine). ATP-binding positions include K18 and 47 to 49 (HNE). Mg(2+) is bound at residue D50. ATP-binding positions include D67, D90, and 138–140 (GHS). A Mg(2+)-binding site is contributed by D90. D227 provides a ligand contact to Mg(2+).

The protein belongs to the selenophosphate synthase 1 family. Class I subfamily. In terms of assembly, homodimer. It depends on Mg(2+) as a cofactor.

It carries out the reaction hydrogenselenide + ATP + H2O = selenophosphate + AMP + phosphate + 2 H(+). In terms of biological role, synthesizes selenophosphate from selenide and ATP. The protein is Selenide, water dikinase of Nitratidesulfovibrio vulgaris (strain DSM 19637 / Miyazaki F) (Desulfovibrio vulgaris).